We begin with the raw amino-acid sequence, 1203 residues long: Regulator of telomere elongation helicase 1 (1203 aa).

One can recognise a Helicase ATP-binding domain in the interval 7 to 296 (NGVTVDFPFQ…ARVTQQGELQ (290 aa)). 42–49 (SPTGTGKT) serves as a coordination point for ATP. Residues Cys-145, Cys-163, Cys-172, and Cys-207 each contribute to the [4Fe-4S] cluster site. A Nuclear localization signal motif is present at residues 151–167 (KKQESNHMQISLCRKKV). Positions 250–253 (DEAH) match the DEAH box motif. A Nuclear localization signal motif is present at residues 871-877 (QKGGRKK). Disordered stretches follow at residues 998-1020 (QLDP…TSKG) and 1120-1203 (TTGK…RSKQ). The segment covering 1004–1020 (HLNQGQPHLSAHPTSKG) has biased composition (polar residues). The span at 1123–1134 (KDLELEGPRDES) shows a compositional bias: basic and acidic residues. Residues 1160–1167 (QSKISSFF) carry the PIP-box motif. Over residues 1169-1181 (QRPDESVRSDDTT) the composition is skewed to basic and acidic residues.

The protein belongs to the helicase family. RAD3/XPD subfamily. As to quaternary structure, interacts with TERF1. Interacts (via PIP-box) with PCNA; the interaction is direct and essential for suppressing telomere fragility. Interacts with MMS19; the interaction mediates the association of RTEL1 with the cytosolic iron-sulfur protein assembly (CIA) complex. Widely expressed. Expressed in spleen, thymus, Peyer patches, kidney, and intestine. Not expressed in brain, heart, lung, skeletal muscles, skin and white fat. In the adult gonad, it is highly expressed in the testis, mainly in the spermatogonia and meiotic spermatocytes.

The protein localises to the nucleus. The catalysed reaction is ATP + H2O = ADP + phosphate + H(+). Its function is as follows. A probable ATP-dependent DNA helicase implicated in telomere-length regulation, DNA repair and the maintenance of genomic stability. Acts as an anti-recombinase to counteract toxic recombination and limit crossover during meiosis. Regulates meiotic recombination and crossover homeostasis by physically dissociating strand invasion events and thereby promotes noncrossover repair by meiotic synthesis dependent strand annealing (SDSA) as well as disassembly of D loop recombination intermediates. Also disassembles T loops and prevents telomere fragility by counteracting telomeric G4-DNA structures, which together ensure the dynamics and stability of the telomere. This Mus musculus (Mouse) protein is Regulator of telomere elongation helicase 1.